The chain runs to 573 residues: Putative adenine deaminase PTO1085 (573 aa).

Belongs to the metallo-dependent hydrolases superfamily. Adenine deaminase family.

The enzyme catalyses adenine + H2O + H(+) = hypoxanthine + NH4(+). In Picrophilus torridus (strain ATCC 700027 / DSM 9790 / JCM 10055 / NBRC 100828 / KAW 2/3), this protein is Putative adenine deaminase PTO1085.